Here is a 130-residue protein sequence, read N- to C-terminus: Mating-type-like protein A1 (130 aa).

Positions 68–127 form a DNA-binding region, homeobox; it reads TYTTRKPLPAKAKLQLVETFSKKRYLTRCEKHQLAVQCGITTNQVQIWFANRRKRSKDLN.

This sequence belongs to the MATA1 family.

The protein localises to the nucleus. Its function is as follows. Mating type proteins are sequence specific DNA-binding proteins that act as master switches in yeast differentiation by controlling gene expression in a cell type-specific fashion. The chain is Mating-type-like protein A1 (MTL1A1) from Candida glabrata (strain ATCC 2001 / BCRC 20586 / JCM 3761 / NBRC 0622 / NRRL Y-65 / CBS 138) (Yeast).